The sequence spans 119 residues: VIGGDECNINEHPFLVALYYSTFFCGMTLINQEWVLTAAHESEKFPKEKYFIFCPNNKDIMLIRLDKPVSNSEHIAPLSLPSSPPSVGSVCRKPALYTKVFDYLLWIQSIIAGNTATCP.

The Peptidase S1 domain occupies 1 to 112 (VIGGDECNIN…YLLWIQSIIA (112 aa)). Active-site charge relay system residues include His40 and Asp59. Cys54 and Cys118 are joined by a disulfide.

In terms of assembly, monomer. Post-translationally, contains both N-linked carbohydrates and sialic acid. As to expression, expressed by the venom gland.

It localises to the secreted. Its activity is regulated as follows. Strongly inhibited by PMSF and slightly inhibited by EDTA and soybean trypsin inhibitor. Its function is as follows. Thrombin-like snake venom serine protease, with high clotting activity in vitro. Also has fibrinogenolytic ability, showing a fast degradation of fibrinogen Aalpha chain (FGA), a slow degradation of Bbeta chain (FGB) and no degradation of gamma chain. Also causes platelet aggregation in platelet rich plasma (PRP) and washed platelet suspension. In Bothrocophias andianus (Andean lancehead), this protein is Thrombin-like enzyme TLBan.